A 168-amino-acid chain; its full sequence is MPRSRINGNFIDKTSSIVANILLRIIPTTSGEKEAFTYYRDGMSAQSEGNYAEALQNYYEAMRLEIDPYDRSYILYNIGLIHTSNGEHTKALEYYFRALERNPFLPQAFNNMAVICHYRGEQAIRQGDSEIAEAWSDQAAEYWKQAIALTPGNYIEAHNWLKITRRFE.

3 TPR repeats span residues 35–68 (AFTY…EIDP), 72–105 (SYIL…NPFL), and 120–153 (GEQA…TPGN).

This sequence belongs to the Ycf3 family.

It localises to the plastid. Its subcellular location is the chloroplast thylakoid membrane. Functionally, essential for the assembly of the photosystem I (PSI) complex. May act as a chaperone-like factor to guide the assembly of the PSI subunits. The polypeptide is Photosystem I assembly protein Ycf3 (Drimys granadensis).